The following is a 245-amino-acid chain: tRNA1(Val) (adenine(37)-N6)-methyltransferase (245 aa).

The protein belongs to the methyltransferase superfamily. tRNA (adenine-N(6)-)-methyltransferase family.

Its subcellular location is the cytoplasm. It carries out the reaction adenosine(37) in tRNA1(Val) + S-adenosyl-L-methionine = N(6)-methyladenosine(37) in tRNA1(Val) + S-adenosyl-L-homocysteine + H(+). Its function is as follows. Specifically methylates the adenine in position 37 of tRNA(1)(Val) (anticodon cmo5UAC). In Citrobacter koseri (strain ATCC BAA-895 / CDC 4225-83 / SGSC4696), this protein is tRNA1(Val) (adenine(37)-N6)-methyltransferase.